The sequence spans 546 residues: Chaperonin GroEL (546 aa).

ATP contacts are provided by residues Thr29 to Pro32, Lys50, Asp86 to Thr90, Gly414, and Asp492.

Belongs to the chaperonin (HSP60) family. As to quaternary structure, forms a cylinder of 14 subunits composed of two heptameric rings stacked back-to-back. Interacts with the co-chaperonin GroES.

Its subcellular location is the cytoplasm. It catalyses the reaction ATP + H2O + a folded polypeptide = ADP + phosphate + an unfolded polypeptide.. In terms of biological role, together with its co-chaperonin GroES, plays an essential role in assisting protein folding. The GroEL-GroES system forms a nano-cage that allows encapsulation of the non-native substrate proteins and provides a physical environment optimized to promote and accelerate protein folding. The chain is Chaperonin GroEL from Helicobacter pylori (strain J99 / ATCC 700824) (Campylobacter pylori J99).